Here is a 292-residue protein sequence, read N- to C-terminus: Ribosomal protein L11 methyltransferase (292 aa).

S-adenosyl-L-methionine-binding residues include Thr136, Gly159, Asp181, and Asn228.

This sequence belongs to the methyltransferase superfamily. PrmA family.

It is found in the cytoplasm. The catalysed reaction is L-lysyl-[protein] + 3 S-adenosyl-L-methionine = N(6),N(6),N(6)-trimethyl-L-lysyl-[protein] + 3 S-adenosyl-L-homocysteine + 3 H(+). Functionally, methylates ribosomal protein L11. The chain is Ribosomal protein L11 methyltransferase from Rhizobium etli (strain CIAT 652).